A 1850-amino-acid chain; its full sequence is Chitin synthase V (1850 aa).

The interval 1 to 27 (MASTLPPLGGGNGGPHTQHSLPSLPAH) is disordered. The Myosin motor domain occupies 1–779 (MASTLPPLGG…EIAGLVDGSA (779 aa)). 105–112 (GESGSGKS) provides a ligand contact to ATP. N-linked (GlcNAc...) asparagine glycosylation is found at asparagine 245, asparagine 290, asparagine 427, asparagine 481, and asparagine 558. The interval 289–309 (NNTSATGDDSGGFSHEGGQTS) is disordered. Positions 593–647 (SKPMRAPSVMSRKGGRGRGIASQRRQQESNLFDSGNTHAESRSPKGGNKGGIDQG) are disordered. Polar residues predominate over residues 620 to 630 (ESNLFDSGNTH). Residues 656–680 (LDNVQKAVTDPGTNAYFVFCLKPND) form an actin-binding region. 2 helical membrane passes run 884 to 904 (WVFTVYFLTWFIPDFLIRWIG) and 923 to 943 (MLIWFMCLVAAFFIVVFPMLI). The 60-residue stretch at 947-1006 (QNVFSAAELSSHNGKDGNSAYVSIRGHVIDLGSFADRHYPSFVSRKTMLNYAGMDVSSLF) folds into the Cytochrome b5 heme-binding domain. Residues asparagine 1033, asparagine 1058, and asparagine 1186 are each glycosylated (N-linked (GlcNAc...) asparagine). A helical transmembrane segment spans residues 1196–1216 (LVLAVSILLVSVIAFKFFAAL). Residues asparagine 1453 and asparagine 1559 are each glycosylated (N-linked (GlcNAc...) asparagine). 4 consecutive transmembrane segments (helical) span residues 1568-1588 (LIPMAQLCGFCCFSMRFVVFI), 1590-1610 (LLSTVVQPVTIAYIVYLIVLV), 1617-1637 (VPITAFILLGAIYGLQAIIFI), and 1644-1664 (MVGWMILYVMAVPVFSFGLPL). Residue asparagine 1767 is glycosylated (N-linked (GlcNAc...) asparagine). In terms of domain architecture, DEK-C spans 1800–1850 (LPSDDALLAEIRDILKTADLMTVTKKGIKQELERRFDVPLDAKRAYINSGK).

This sequence in the N-terminal section; belongs to the TRAFAC class myosin-kinesin ATPase superfamily. Myosin family. In the C-terminal section; belongs to the chitin synthase family. Class V subfamily. As to expression, expressed in conidia and during appressorium formation.

Its subcellular location is the cell membrane. The protein resides in the cell septum. It localises to the cell tip. The catalysed reaction is [(1-&gt;4)-N-acetyl-beta-D-glucosaminyl](n) + UDP-N-acetyl-alpha-D-glucosamine = [(1-&gt;4)-N-acetyl-beta-D-glucosaminyl](n+1) + UDP + H(+). In terms of biological role, polymerizes chitin, a structural polymer of the cell wall and septum, by transferring the sugar moiety of UDP-GlcNAc to the non-reducing end of the growing chitin polymer. Contributes to the production of conidia and the ability of fungal conidia to germinate. Involved in the fungal cell wall integrity and the ability of conidia to withstand biophysical pressure. Required for appressorium formation and evasion of insect cellular and/or humoral defenses, promoting the fungal dimorphic transition to the production of hyphal bodies that occurs within hosts, and ultimately to virulence. This is Chitin synthase V from Metarhizium acridum (strain CQMa 102).